A 103-amino-acid polypeptide reads, in one-letter code: Small ribosomal subunit protein uS10 (103 aa).

Belongs to the universal ribosomal protein uS10 family. Part of the 30S ribosomal subunit.

Involved in the binding of tRNA to the ribosomes. The sequence is that of Small ribosomal subunit protein uS10 from Shewanella amazonensis (strain ATCC BAA-1098 / SB2B).